Consider the following 773-residue polypeptide: Tyrosine kinase receptor Cad96Ca (773 aa).

The first 48 residues, 1–48 (MVYHHHNHESRIIHCRKQLTSWRRRSLLLTIIVVTATVVSLISQEAEA), serve as a signal peptide directing secretion. The Extracellular segment spans residues 49–315 (HNQNAPPILY…ITIFSLKSGT (267 aa)). Positions 58 to 172 (YVRERNWRIS…ENSSGYRPQT (115 aa)) constitute a Cadherin domain. Asn-126, Asn-164, and Asn-180 each carry an N-linked (GlcNAc...) asparagine glycan. The interval 196–302 (SIRNGLPNSR…TPSGGHHNNS (107 aa)) is disordered. Pro residues predominate over residues 209–235 (WYPPVPQNNIFGPPPFGNNYPPPPPNI). Residues 243 to 253 (SGEEEQPDEEV) show a composition bias toward acidic residues. 2 stretches are compositionally biased toward polar residues: residues 254–283 (TPTTPVRISSTTPKSRTKLTPITANNSTRV) and 290–302 (ETTTPSGGHHNNS). Asn-278, Asn-279, Asn-300, and Asn-301 each carry an N-linked (GlcNAc...) asparagine glycan. Residues 316–336 (IPIVVTVGGFFVAIAVLLAYL) traverse the membrane as a helical segment. Residues 337-773 (CRRRLCAISR…NIVSLSGEKL (437 aa)) are Cytoplasmic-facing. Disordered stretches follow at residues 352 to 373 (KEKEELAKKSNQSQLSSTLTDD) and 411 to 447 (TGVTNGGVSSPGVPSPGTGEPGSNLGPGCLTGGAGSS). A compositionally biased stretch (polar residues) spans 361-373 (SNQSQLSSTLTDD). Over residues 411-433 (TGVTNGGVSSPGVPSPGTGEPGS) the composition is skewed to low complexity. Residues 470-749 (LKFFNILGEG…MLDKLLHTEM (280 aa)) enclose the Protein kinase domain. ATP-binding positions include 476–484 (LGEGAFGQV) and Lys-504. The active-site Proton acceptor is Asp-610.

It belongs to the protein kinase superfamily. Tyr protein kinase family. Fibroblast growth factor receptor subfamily.

The protein localises to the membrane. It carries out the reaction L-tyrosyl-[protein] + ATP = O-phospho-L-tyrosyl-[protein] + ADP + H(+). In Drosophila melanogaster (Fruit fly), this protein is Tyrosine kinase receptor Cad96Ca (Cad96Ca).